The following is a 78-amino-acid chain: Acyl carrier protein (78 aa).

Residues 2–77 enclose the Carrier domain; sequence STIEERVKKI…EAIDYINAHA (76 aa). An O-(pantetheine 4'-phosphoryl)serine modification is found at serine 37.

The protein belongs to the acyl carrier protein (ACP) family. Post-translationally, 4'-phosphopantetheine is transferred from CoA to a specific serine of apo-ACP by AcpS. This modification is essential for activity because fatty acids are bound in thioester linkage to the sulfhydryl of the prosthetic group.

It localises to the cytoplasm. It functions in the pathway lipid metabolism; fatty acid biosynthesis. In terms of biological role, carrier of the growing fatty acid chain in fatty acid biosynthesis. The sequence is that of Acyl carrier protein from Stutzerimonas stutzeri (strain A1501) (Pseudomonas stutzeri).